The chain runs to 259 residues: MLTKRIIPCLDIKNGKVVKGINFVGLKEIGDPVELAKIYEEQCADEIVFLDITASFEEREIIGELIGRAARELSIPLTVGGGIRSINDFRRILASGADKVSINSAAIENPEFIHQAANEFGVQCVVVAIDAKANESGSSFEVYIKGGRENAGIDLVEWAKKCEKLGAGEILLTSMDKDGTKTGYDLKMLNAVCSAVNIPVVASGGCGSISDIIDVFEKTKSDAALVASLFHYGEATVDEVKEELIKNRIPARIIKKEII.

Residues Asp-11 and Asp-130 contribute to the active site.

The protein belongs to the HisA/HisF family. In terms of assembly, heterodimer of HisH and HisF.

The protein resides in the cytoplasm. The enzyme catalyses 5-[(5-phospho-1-deoxy-D-ribulos-1-ylimino)methylamino]-1-(5-phospho-beta-D-ribosyl)imidazole-4-carboxamide + L-glutamine = D-erythro-1-(imidazol-4-yl)glycerol 3-phosphate + 5-amino-1-(5-phospho-beta-D-ribosyl)imidazole-4-carboxamide + L-glutamate + H(+). The protein operates within amino-acid biosynthesis; L-histidine biosynthesis; L-histidine from 5-phospho-alpha-D-ribose 1-diphosphate: step 5/9. IGPS catalyzes the conversion of PRFAR and glutamine to IGP, AICAR and glutamate. The HisF subunit catalyzes the cyclization activity that produces IGP and AICAR from PRFAR using the ammonia provided by the HisH subunit. The polypeptide is Imidazole glycerol phosphate synthase subunit HisF (Lactococcus lactis subsp. cremoris (strain MG1363)).